The chain runs to 535 residues: Phosphoenolpyruvate carboxykinase (ATP) (535 aa).

The substrate site is built by arginine 59, tyrosine 201, and lysine 207. ATP is bound by residues lysine 207, histidine 226, and glycine 243–threonine 251. Mn(2+) contacts are provided by lysine 207 and histidine 226. Aspartate 264 serves as a coordination point for Mn(2+). Residues glutamate 292, arginine 328, arginine 444–isoleucine 445, and threonine 450 each bind ATP. Arginine 328 contacts substrate.

This sequence belongs to the phosphoenolpyruvate carboxykinase (ATP) family. Requires Mn(2+) as cofactor.

It localises to the cytoplasm. It carries out the reaction oxaloacetate + ATP = phosphoenolpyruvate + ADP + CO2. It participates in carbohydrate biosynthesis; gluconeogenesis. Its function is as follows. Involved in the gluconeogenesis. Catalyzes the conversion of oxaloacetate (OAA) to phosphoenolpyruvate (PEP) through direct phosphoryl transfer between the nucleoside triphosphate and OAA. This is Phosphoenolpyruvate carboxykinase (ATP) from Porphyromonas gingivalis (strain ATCC 33277 / DSM 20709 / CIP 103683 / JCM 12257 / NCTC 11834 / 2561).